A 304-amino-acid chain; its full sequence is Transcription factor BEE 2 (304 aa).

The disordered stretch occupies residues F74 to E132. Polar residues predominate over residues N82–Q91. A compositionally biased stretch (basic and acidic residues) spans R94–R103. Positions G120–E132 are enriched in polar residues. A bHLH domain is found at E147–L197.

Homodimer. As to expression, expressed in stems and flowers.

The protein resides in the nucleus. Positive regulator of brassinosteroid signaling. The chain is Transcription factor BEE 2 (BEE2) from Arabidopsis thaliana (Mouse-ear cress).